The sequence spans 222 residues: 26S proteasome non-ATPase regulatory subunit 9 (222 aa).

A PDZ domain is found at 108–194 (QARDMAEARE…KPLNVTVIRR (87 aa)). A Phosphoserine modification is found at Ser128.

It belongs to the proteasome subunit p27 family. As to quaternary structure, interacts with PSMC3. Part of a transient complex (modulator) containing PSMD9, PSMC6 and PSMC3 formed during the assembly of the 26S proteasome.

Its function is as follows. Acts as a chaperone during the assembly of the 26S proteasome, specifically of the base subcomplex of the PA700/19S regulatory complex (RC). During the base subcomplex assembly is part of an intermediate PSMD9:PSMC6:PSMC3 module, also known as modulator trimer complex; PSMD9 is released during the further base assembly process. This Mus musculus (Mouse) protein is 26S proteasome non-ATPase regulatory subunit 9 (Psmd9).